The primary structure comprises 442 residues: F-box/FBD/LRR-repeat protein At2g26030 (442 aa).

The region spanning 3–49 (CDRICELPDSLLTQVLSYLPTIDSVKTSVLSKRWEFLWLRVPVLDLK) is the F-box domain. LRR repeat units lie at residues 128 to 160 (CNTLVSLMLVTVGIENPEFVVSLPSLKIMHLED), 162 to 187 (WYYDDPLIMEKIISGCPVLEDFVLIR), 188 to 214 (PIDFCNLDVLQFLRVRSLSLRSFRLTF), 234 to 260 (YLNFNDDQSDTIVVKNMTSLSMIDIDS), 278 to 309 (KRDIIRDFLTAISCVRHMIISRRTLEVLDRYS), and 324 to 352 (QAAVSRSMLQLLLVFLESCPNLENLILDF). In terms of domain architecture, FBD spans 358 to 410 (PEQDGLTYVPQCLLSSLECVEIRELIMGEETGEKLVRYFLKNSVVLKKLILRL).

The chain is F-box/FBD/LRR-repeat protein At2g26030 from Arabidopsis thaliana (Mouse-ear cress).